The following is a 56-amino-acid chain: Large ribosomal subunit protein bL32 (56 aa).

The interval 1-21 is disordered; it reads MAVQKNKPTRSKRGMRRSHDA. Residues 7-16 show a composition bias toward basic residues; that stretch reads KPTRSKRGMR.

This sequence belongs to the bacterial ribosomal protein bL32 family.

In Hamiltonella defensa subsp. Acyrthosiphon pisum (strain 5AT), this protein is Large ribosomal subunit protein bL32.